The chain runs to 361 residues: Molybdenum import ATP-binding protein ModC (361 aa).

The ABC transporter domain occupies 1–228 (MLNINIEKQF…EQMRPWVPLQ (228 aa)). Residue 31–38 (GRSGAGKT) participates in ATP binding. Residues 289-356 (GSSIRNLLRG…IKGVTMTQMD (68 aa)) form the Mop domain.

This sequence belongs to the ABC transporter superfamily. Molybdate importer (TC 3.A.1.8) family. In terms of assembly, the complex is composed of two ATP-binding proteins (ModC), two transmembrane proteins (ModB) and a solute-binding protein (ModA).

The protein localises to the cell inner membrane. The catalysed reaction is molybdate(out) + ATP + H2O = molybdate(in) + ADP + phosphate + H(+). Functionally, part of the ABC transporter complex ModABC involved in molybdenum import. Responsible for energy coupling to the transport system. This chain is Molybdenum import ATP-binding protein ModC, found in Shewanella sp. (strain MR-4).